The sequence spans 837 residues: MELFPELKNIKVPTEKSRLWKDECCYCFDTPENGEGLFIDLIGLLAFSKKYVQLNHQKTHHHLYLNFKKVAIVNEKVKSPTIENGGEEKPPKKLAIGVEGGFNVEDEEIKYEEHYKLYIFPDDKFLELSDPIIPENVRVCCEKIKTLNSQSRKEEIVSWNAESVFPSAFAESIIQLDNNTKKIDPKGPWRCDIEGCDKVENLWLNLTDGFIGCGRKYADGTGGNGHAQEHFNQTQYPISVKLGTITKDHADVYSYPEDDMVSDPLLFQHLTHWGLNPNVMVKTEKSMAELELDQNLNFEFGKIQEKGKLLENVFGPGLTGIENLGNSCYMSSVIQMIFAIDSFQTRYLKDREASFKDITQDPTQSFEIQMSKLAHGLLSGDYSIPLSKPSKNANEESEAATQIGIAPKMFKSLIGASHAEFSTMKQQDAHEYLQYLLEYIERAEHSRPSWIQQANPTRLFQFHNEDRIECGSSGQVKYTRRLENILSVPVNLDDATNKQEVAQYEETLKQQNGVRQKDQEEIRPIIPLVSCINGFVEPYRVEDFLSPATGVKTFSLNSSRMATFPEVLIIHLKKYTYNADYTPKKLNVFMDVPDIIDIDSLRGRGIKEGEVPLKEGTINTTTKVPEPSFNQEVLDTLLSMDFPLVRCKKALLATGGKDAELAMNWIFEHTEDPDIDIEQTPVNNNNNNNNSSNSNDKLFVFNSQDVDNIIGMGFTDSQAKLALKNTKGNLERAADWLFSHIDNLDELVAKDNASTSSINPSLIPQSTTSLQPVSDGVGKYELLGFISHLGNNVTCGHYVCHIKKNNRWIKFNDRHVQLSEQPPKELGYIYFYKRQLN.

The UBP-type; degenerate zinc finger occupies 166–277 (PSAFAESIIQ…QHLTHWGLNP (112 aa)). A USP domain is found at 319–835 (TGIENLGNSC…LGYIYFYKRQ (517 aa)). Residue C328 is the Nucleophile of the active site. The region spanning 628-669 (SFNQEVLDTLLSMDFPLVRCKKALLATGGKDAELAMNWIFEH) is the UBA 1 domain. Positions 676–695 (DIEQTPVNNNNNNNNSSNSN) are disordered. Over residues 683-695 (NNNNNNNNSSNSN) the composition is skewed to low complexity. A UBA 2 domain is found at 700–740 (VFNSQDVDNIIGMGFTDSQAKLALKNTKGNLERAADWLFSH). H797 functions as the Proton acceptor in the catalytic mechanism.

It belongs to the peptidase C19 family.

The catalysed reaction is Thiol-dependent hydrolysis of ester, thioester, amide, peptide and isopeptide bonds formed by the C-terminal Gly of ubiquitin (a 76-residue protein attached to proteins as an intracellular targeting signal).. Functionally, required for development but not growth. The polypeptide is Ubiquitin carboxyl-terminal hydrolase A (ubpA) (Dictyostelium discoideum (Social amoeba)).